A 707-amino-acid polypeptide reads, in one-letter code: Golgin candidate 1 (707 aa).

The Cytoplasmic portion of the chain corresponds to 1–664 (MASWLKAAED…RATRFLWRYP (664 aa)). Disordered stretches follow at residues 22 to 106 (VVED…EIHP), 121 to 196 (VADT…SKRD), and 234 to 256 (QEPK…ADTT). The segment covering 38–47 (SGRKGSQGKR) has biased composition (low complexity). A compositionally biased stretch (basic and acidic residues) spans 56 to 67 (VKEESSNKRDSS). Polar residues predominate over residues 68–80 (GDQSGPGVSQSEV). Low complexity predominate over residues 83–95 (SKSSVSTDETSSS). Composition is skewed to basic and acidic residues over residues 139 to 150 (DGDRSESKHADG), 185 to 196 (TQRELDDSSKRD), and 245 to 254 (LKREQDRRAD). Coiled-coil stretches lie at residues 287–424 (RVCA…NATK) and 452–608 (ADER…KSRV). Residues 665–685 (IARMFLLFYLVFVHLFLMYLI) form a helical; Signal-anchor for type II membrane protein membrane-spanning segment. Residues 686-707 (HRLQEQAEAQEVAAMTNNVFRL) are Lumenal-facing.

It localises to the golgi apparatus membrane. Its function is as follows. Golgi matrix protein playing a role in tethering of vesicles to Golgi membranes and in maintaining the overall structure of the Golgi apparatus. The chain is Golgin candidate 1 (GC1) from Arabidopsis thaliana (Mouse-ear cress).